The chain runs to 439 residues: D-erythronate kinase (439 aa).

ATP-binding positions include Ser253, 366 to 369, and Gly412; that span reads GGDV.

Belongs to the four-carbon acid sugar kinase family.

The enzyme catalyses D-erythronate + ATP = 4-phospho-D-erythronate + ADP + H(+). Catalyzes the ATP-dependent phosphorylation of D-erythronate to D-erythronate 4-phosphate. Can also phosphorylate D-threonate and 4-hydroxy-L-threonine, with lower efficiency. This chain is D-erythronate kinase, found in Heliobacterium modesticaldum (strain ATCC 51547 / Ice1).